Here is a 433-residue protein sequence, read N- to C-terminus: D-amino acid dehydrogenase (433 aa).

3–17 (VLVLGSGVIGTASAY) contacts FAD.

The protein belongs to the DadA oxidoreductase family. FAD serves as cofactor.

The catalysed reaction is a D-alpha-amino acid + A + H2O = a 2-oxocarboxylate + AH2 + NH4(+). It participates in amino-acid degradation; D-alanine degradation; NH(3) and pyruvate from D-alanine: step 1/1. Oxidative deamination of D-amino acids. This Pseudomonas putida (strain W619) protein is D-amino acid dehydrogenase.